We begin with the raw amino-acid sequence, 432 residues long: MKKTHITEQNFADLGLQPQVIDGLNAKGFIKCTPIQAKALPVLLAGQDIAGQAQTGTGKTLAFLTATFNHLLTTPAPEGRKITQPRAIIMAPTRELAIQIFNDAESLIASTGLKAALAYGGERYEKQQQVIEQGVDILIGTTGRIIDFYKQGHIDFKMIQAVVLDEADRMFDLGFIKDIRFIFRRMPAPTERLNMLFSATLSYRVQELAFEHMQEPEHVVVEPEQKTGHRIKEELFYPSNDHKMALLQTLIEEEWPDRAIIFANTKHKCESVWGHLAADKHRVGLLTGDVPQKKRERILEEFTQGNVDILVATDVAARGLHIPQVTHVFNFDLPNEAEDYVHRIGRTGRAGASGNSISFACEEYAINLPAIEEYIEHSIPQSDYDASALLEDLPAPLRLQRRPQQNRRNNNGQRQGGNRKHTRPRQPRNTQS.

Residues Gln9–Ala37 carry the Q motif motif. The Helicase ATP-binding domain maps to Leu40 to Val219. Residue Ala53–Thr60 coordinates ATP. Positions Asp165–Asp168 match the DEAD box motif. A Helicase C-terminal domain is found at Ala245–Leu390. The interval Pro396 to Ser432 is disordered. Residues Gly417–Gln426 show a composition bias toward basic residues.

It belongs to the DEAD box helicase family. RhlB subfamily. Component of the RNA degradosome, which is a multiprotein complex involved in RNA processing and mRNA degradation.

It is found in the cytoplasm. It carries out the reaction ATP + H2O = ADP + phosphate + H(+). DEAD-box RNA helicase involved in RNA degradation. Has RNA-dependent ATPase activity and unwinds double-stranded RNA. In Aliivibrio fischeri (strain ATCC 700601 / ES114) (Vibrio fischeri), this protein is ATP-dependent RNA helicase RhlB.